A 201-amino-acid chain; its full sequence is Pyridoxine/pyridoxamine 5'-phosphate oxidase (201 aa).

FMN-binding positions include 49-54 (RMVLLK), 64-65 (YT), Lys-71, and Gln-93. Lys-54 is a binding site for substrate. Residues Tyr-111, Arg-115, and Ser-119 each contribute to the substrate site. FMN contacts are provided by residues 128–129 (QS) and Trp-172. 178-180 (RLH) lines the substrate pocket. Arg-182 is a binding site for FMN.

It belongs to the pyridoxamine 5'-phosphate oxidase family. Homodimer. FMN serves as cofactor.

It catalyses the reaction pyridoxamine 5'-phosphate + O2 + H2O = pyridoxal 5'-phosphate + H2O2 + NH4(+). It carries out the reaction pyridoxine 5'-phosphate + O2 = pyridoxal 5'-phosphate + H2O2. It participates in cofactor metabolism; pyridoxal 5'-phosphate salvage; pyridoxal 5'-phosphate from pyridoxamine 5'-phosphate: step 1/1. The protein operates within cofactor metabolism; pyridoxal 5'-phosphate salvage; pyridoxal 5'-phosphate from pyridoxine 5'-phosphate: step 1/1. In terms of biological role, catalyzes the oxidation of either pyridoxine 5'-phosphate (PNP) or pyridoxamine 5'-phosphate (PMP) into pyridoxal 5'-phosphate (PLP). In Roseobacter denitrificans (strain ATCC 33942 / OCh 114) (Erythrobacter sp. (strain OCh 114)), this protein is Pyridoxine/pyridoxamine 5'-phosphate oxidase.